Consider the following 431-residue polypeptide: Beclin-2 (431 aa).

The disordered stretch occupies residues 17 to 74 (LSGSSESRSLPAAPAPTSGQAEPGDTREPGVTTREVTDAEEQQDGASSRSPPGDGSVS). Residues 125 to 248 (LLEQLDIQLA…ARVQRDRLKE (124 aa)) are a coiled coil. The required for homodimer formation stretch occupies residues 173 to 243 (EARLVQELED…NQLQYARVQR (71 aa)).

It belongs to the beclin family. As to quaternary structure, homodimer (via coiled-coil domain). Interacts (via coiled-coil domain) with ATG14 (via coiled-coil domain); this interaction is tighter than BECN2 self-association. Interacts with AMBRA1, UVRAG and PIK3C3/VPS34; these interactions are not disrupted by starvation. Does not interact with RUBCN. Interacts (via N-terminus) with GPRASP1/GASP1; the interaction is direct. As to expression, present in fetal and adult brain (at protein level).

The protein localises to the cytoplasm. In terms of biological role, involved in 2 distinct lysosomal degradation pathways: acts as a regulator of autophagy and as a regulator of G-protein coupled receptors turnover. Regulates degradation in lysosomes of a variety of G-protein coupled receptors via its interaction with GPRASP1/GASP1. This chain is Beclin-2, found in Homo sapiens (Human).